Here is a 452-residue protein sequence, read N- to C-terminus: GTPase Der (452 aa).

2 consecutive EngA-type G domains span residues 9 to 170 and 185 to 362; these read KIIA…PEED and LQIV…KTWN. Residues 15 to 22, 62 to 66, 124 to 127, 191 to 198, 238 to 242, and 303 to 306 contribute to the GTP site; these read GRPNVGKS, DTPGL, NKCE, GRPNAGKS, DTAGL, and NKWD. In terms of domain architecture, KH-like spans 363–448; sequence KKITTSKLNE…PIRFNYIKTK (86 aa).

It belongs to the TRAFAC class TrmE-Era-EngA-EngB-Septin-like GTPase superfamily. EngA (Der) GTPase family. In terms of assembly, associates with the 50S ribosomal subunit.

In terms of biological role, GTPase that plays an essential role in the late steps of ribosome biogenesis. This chain is GTPase Der, found in Rickettsia bellii (strain RML369-C).